The chain runs to 138 residues: Molluscan insulin-related peptide 5 (138 aa).

The N-terminal stretch at 1–31 (MAGVRLVFTKAFMVTVLLTLLLNIGVKPAEG) is a signal peptide. Residue Gln-32 is modified to Pyrrolidone carboxylic acid. Disulfide bonds link Cys-48-Cys-124, Cys-60-Cys-137, and Cys-123-Cys-128. Positions 72–84 (DAETGWLLPETMV) are cleaved as a propeptide — C-beta peptide like. A propeptide spans 87–111 (NAQTDLDDPLRNIKLSSESALTYLT) (C-alpha peptide like). The residue at position 114 (Gln-114) is a Pyrrolidone carboxylic acid.

It belongs to the insulin family. As to quaternary structure, heterodimer of a B chain and an A chain linked by two disulfide bonds. As to expression, expressed in the cerebral light-green cells which are giant neuroendocrines cells involved in the control of growth.

It is found in the cytoplasmic vesicle. The protein localises to the secretory vesicle. This is Molluscan insulin-related peptide 5 from Lymnaea stagnalis (Great pond snail).